Consider the following 174-residue polypeptide: uncharacterized protein (174 aa).

In terms of domain architecture, N-acetyltransferase spans 42–174 (SSNKNINLYE…GVKGMFWYPR (133 aa)).

Belongs to the acetyltransferase family. Ycf52 subfamily.

It localises to the plastid. The protein localises to the chloroplast. This is an uncharacterized protein from Pyropia yezoensis (Susabi-nori).